Reading from the N-terminus, the 236-residue chain is MDSTILIKLSGESLANKQKSLAIDYELVRQIGSQLKEIQNLGHKILIVIGGGNFWRGTSAAKNGINRNTADYIGMLGTVMNGLALDSVFRDLGIKTRVLSSMSLDPRICEYFVREKAMKYLEDNNVLIFVGGTGRPFFTTDSAATLFASEMGANIILVGKNNVNGIFDSDPKINPNALRYDKITYNQVIEKNLKVMDSTAFSMARDNKIKLLIFDIKEKNSISKLIKRQIKHTEVY.

8-11 (KLSG) is a binding site for ATP. Position 51 (Gly-51) interacts with UMP. ATP-binding residues include Gly-52 and Arg-56. Residues Asp-71 and 133–140 (TGRPFFTT) each bind UMP. Residues Asn-161, Phe-167, and Asp-170 each coordinate ATP.

Belongs to the UMP kinase family. As to quaternary structure, homohexamer.

The protein localises to the cytoplasm. It catalyses the reaction UMP + ATP = UDP + ADP. The protein operates within pyrimidine metabolism; CTP biosynthesis via de novo pathway; UDP from UMP (UMPK route): step 1/1. Inhibited by UTP. In terms of biological role, catalyzes the reversible phosphorylation of UMP to UDP. This Mesomycoplasma hyopneumoniae (strain 232) (Mycoplasma hyopneumoniae) protein is Uridylate kinase.